The following is a 302-amino-acid chain: Light-independent protochlorophyllide reductase iron-sulfur ATP-binding protein (302 aa).

ATP contacts are provided by residues 46–51 and K75; that span reads GIGKST. Residue S50 participates in Mg(2+) binding. [4Fe-4S] cluster contacts are provided by C131 and C165. Residue 216 to 217 coordinates ATP; the sequence is NR.

Belongs to the NifH/BchL/ChlL family. In terms of assembly, homodimer. Protochlorophyllide reductase is composed of three subunits; BchL, BchN and BchB. The cofactor is [4Fe-4S] cluster.

It carries out the reaction chlorophyllide a + oxidized 2[4Fe-4S]-[ferredoxin] + 2 ADP + 2 phosphate = protochlorophyllide a + reduced 2[4Fe-4S]-[ferredoxin] + 2 ATP + 2 H2O. Its pathway is porphyrin-containing compound metabolism; bacteriochlorophyll biosynthesis (light-independent). Component of the dark-operative protochlorophyllide reductase (DPOR) that uses Mg-ATP and reduced ferredoxin to reduce ring D of protochlorophyllide (Pchlide) to form chlorophyllide a (Chlide). This reaction is light-independent. The L component serves as a unique electron donor to the NB-component of the complex, and binds Mg-ATP. This Methylocella silvestris (strain DSM 15510 / CIP 108128 / LMG 27833 / NCIMB 13906 / BL2) protein is Light-independent protochlorophyllide reductase iron-sulfur ATP-binding protein.